A 147-amino-acid polypeptide reads, in one-letter code: UPF0735 ACT domain-containing protein BPUM_2431 (147 aa).

In terms of domain architecture, ACT spans 70-145 (TLFFHLEDRS…FVEKVEILGS (76 aa)).

Belongs to the UPF0735 family.

The sequence is that of UPF0735 ACT domain-containing protein BPUM_2431 from Bacillus pumilus (strain SAFR-032).